A 391-amino-acid chain; its full sequence is Chaperone protein DnaJ (391 aa).

Positions 6 to 70 (DYYEILEVSR…EKRKLYDTYG (65 aa)) constitute a J domain. Residues 145 to 226 (GCIKNVKYTR…CKSRRMVDEV (82 aa)) form a CR-type zinc finger. 8 residues coordinate Zn(2+): cysteine 158, cysteine 161, cysteine 174, cysteine 177, cysteine 200, cysteine 203, cysteine 214, and cysteine 217. 4 CXXCXGXG motif repeats span residues 158 to 165 (CPDCNGSG), 174 to 181 (CSDCNGEG), 200 to 207 (CPSCKGEG), and 214 to 221 (CKKCKSRR).

Belongs to the DnaJ family. As to quaternary structure, homodimer. Zn(2+) is required as a cofactor.

The protein resides in the cytoplasm. Participates actively in the response to hyperosmotic and heat shock by preventing the aggregation of stress-denatured proteins and by disaggregating proteins, also in an autonomous, DnaK-independent fashion. Unfolded proteins bind initially to DnaJ; upon interaction with the DnaJ-bound protein, DnaK hydrolyzes its bound ATP, resulting in the formation of a stable complex. GrpE releases ADP from DnaK; ATP binding to DnaK triggers the release of the substrate protein, thus completing the reaction cycle. Several rounds of ATP-dependent interactions between DnaJ, DnaK and GrpE are required for fully efficient folding. Also involved, together with DnaK and GrpE, in the DNA replication of plasmids through activation of initiation proteins. The polypeptide is Chaperone protein DnaJ (Mycoplasmoides gallisepticum (strain R(low / passage 15 / clone 2)) (Mycoplasma gallisepticum)).